We begin with the raw amino-acid sequence, 210 residues long: MASALALKRLLSSSIAPRSRSVLRPAVSSRLFNTNAVRSYDDDGENGDGVDLYRRSVPRRRGDFFSDVFDPFSPTRSVSQVLNLMDQFMENPLLSATRGMGASGARRGWDIKEKDDALYLRIDMPGLSREDVKLALEQDTLVIRGEGKNEEDGGEEGESGNRRFTSRIGLPDKIYKIDEIKAEMKNGVLKVVIPKMKEQERNDVRQIEIN.

The transit peptide at 1 to 31 (MASALALKRLLSSSIAPRSRSVLRPAVSSRL) directs the protein to the mitochondrion. Residues 100 to 210 (MGASGARRGW…RNDVRQIEIN (111 aa)) form the sHSP domain. The segment at 145 to 165 (GEGKNEEDGGEEGESGNRRFT) is disordered.

It belongs to the small heat shock protein (HSP20) family. May form oligomeric structures.

The protein resides in the mitochondrion. The polypeptide is 23.6 kDa heat shock protein, mitochondrial (HSP23.6) (Arabidopsis thaliana (Mouse-ear cress)).